A 156-amino-acid polypeptide reads, in one-letter code: 6,7-dimethyl-8-ribityllumazine synthase (156 aa).

5-amino-6-(D-ribitylamino)uracil is bound by residues Phe23, Ser57–Glu59, and Ala81–Ile83. Residue Gly86 to Thr87 coordinates (2S)-2-hydroxy-3-oxobutyl phosphate. His89 functions as the Proton donor in the catalytic mechanism. Position 114 (Tyr114) interacts with 5-amino-6-(D-ribitylamino)uracil. Arg128 serves as a coordination point for (2S)-2-hydroxy-3-oxobutyl phosphate.

It belongs to the DMRL synthase family. As to quaternary structure, forms an icosahedral capsid composed of 60 subunits, arranged as a dodecamer of pentamers.

The enzyme catalyses (2S)-2-hydroxy-3-oxobutyl phosphate + 5-amino-6-(D-ribitylamino)uracil = 6,7-dimethyl-8-(1-D-ribityl)lumazine + phosphate + 2 H2O + H(+). It participates in cofactor biosynthesis; riboflavin biosynthesis; riboflavin from 2-hydroxy-3-oxobutyl phosphate and 5-amino-6-(D-ribitylamino)uracil: step 1/2. Functionally, catalyzes the formation of 6,7-dimethyl-8-ribityllumazine by condensation of 5-amino-6-(D-ribitylamino)uracil with 3,4-dihydroxy-2-butanone 4-phosphate. This is the penultimate step in the biosynthesis of riboflavin. This Halorhodospira halophila (strain DSM 244 / SL1) (Ectothiorhodospira halophila (strain DSM 244 / SL1)) protein is 6,7-dimethyl-8-ribityllumazine synthase.